A 249-amino-acid chain; its full sequence is ATP synthase subunit a (249 aa).

The next 6 helical transmembrane spans lie at Phe26–Leu46, Phe84–Phe104, Ile114–Phe134, Leu143–Ile163, Ile185–Ile205, and Thr208–Leu228.

The protein belongs to the ATPase A chain family. F-type ATPases have 2 components, CF(1) - the catalytic core - and CF(0) - the membrane proton channel. CF(1) has five subunits: alpha(3), beta(3), gamma(1), delta(1), epsilon(1). CF(0) has three main subunits: a(1), b(2) and c(9-12). The alpha and beta chains form an alternating ring which encloses part of the gamma chain. CF(1) is attached to CF(0) by a central stalk formed by the gamma and epsilon chains, while a peripheral stalk is formed by the delta and b chains.

The protein resides in the cell inner membrane. In terms of biological role, key component of the proton channel; it plays a direct role in the translocation of protons across the membrane. This is ATP synthase subunit a from Brucella ovis (strain ATCC 25840 / 63/290 / NCTC 10512).